The following is a 306-amino-acid chain: Porphobilinogen deaminase (306 aa).

At cysteine 241 the chain carries S-(dipyrrolylmethanemethyl)cysteine.

Belongs to the HMBS family. Monomer. Dipyrromethane serves as cofactor.

The enzyme catalyses 4 porphobilinogen + H2O = hydroxymethylbilane + 4 NH4(+). It functions in the pathway porphyrin-containing compound metabolism; protoporphyrin-IX biosynthesis; coproporphyrinogen-III from 5-aminolevulinate: step 2/4. In terms of biological role, tetrapolymerization of the monopyrrole PBG into the hydroxymethylbilane pre-uroporphyrinogen in several discrete steps. In Acidithiobacillus ferrooxidans (strain ATCC 23270 / DSM 14882 / CIP 104768 / NCIMB 8455) (Ferrobacillus ferrooxidans (strain ATCC 23270)), this protein is Porphobilinogen deaminase.